Reading from the N-terminus, the 120-residue chain is MFLLYEYDIFWAFLIISSLIPILVFFISGFLAPSSKGPEKLSSYESGIEPIGDAWLQFRIRYYMFALVFVVFDVETVFLYPWAMSFDVLGVSVFVEALIFVLILIVGLVYAWRKGALEWS.

Transmembrane regions (helical) follow at residues 9–29 (IFWA…FISG), 64–84 (MFAL…PWAM), and 88–108 (VLGV…IVGL).

This sequence belongs to the complex I subunit 3 family. As to quaternary structure, NDH is composed of at least 16 different subunits, 5 of which are encoded in the nucleus.

The protein resides in the plastid. It localises to the chloroplast thylakoid membrane. The catalysed reaction is a plastoquinone + NADH + (n+1) H(+)(in) = a plastoquinol + NAD(+) + n H(+)(out). It catalyses the reaction a plastoquinone + NADPH + (n+1) H(+)(in) = a plastoquinol + NADP(+) + n H(+)(out). NDH shuttles electrons from NAD(P)H:plastoquinone, via FMN and iron-sulfur (Fe-S) centers, to quinones in the photosynthetic chain and possibly in a chloroplast respiratory chain. The immediate electron acceptor for the enzyme in this species is believed to be plastoquinone. Couples the redox reaction to proton translocation, and thus conserves the redox energy in a proton gradient. In Guizotia abyssinica (Niger), this protein is NAD(P)H-quinone oxidoreductase subunit 3, chloroplastic.